The sequence spans 917 residues: Dolichyl-phosphooligosaccharide-protein glycotransferase (917 aa).

The span at 1-10 (MTENNEKVKN) shows a compositional bias: basic and acidic residues. Residues 1–20 (MTENNEKVKNSDSANNQSSK) form a disordered region. Over 1-38 (MTENNEKVKNSDSANNQSSKNSKFNFNFEDKKVKCAKT) the chain is Cytoplasmic. Over residues 11 to 20 (SDSANNQSSK) the composition is skewed to low complexity. The chain crosses the membrane as a helical span at residues 39-59 (ILIIIFLAFLSFQMRAQTADM). The Extracellular segment spans residues 60 to 154 (GFTTNEQYLD…AMDSTVTLMN (95 aa)). A DXD motif 1 motif is present at residues 82 to 84 (ALD). Asp84 is a Mn(2+) binding site. The chain crosses the membrane as a helical span at residues 155–175 (AAFWVPAILSMFLITPIFFTV). Residues 176 to 182 (RRITSSD) lie on the Cytoplasmic side of the membrane. The helical transmembrane segment at 183–203 (IGGAVAAILASLSPSIFVKTV) threads the bilayer. Residues 204 to 209 (AGFSDT) are Extracellular-facing. Asp208 contacts Mn(2+). A DXD motif 2 motif is present at residues 208 to 210 (DTP). A helical membrane pass occupies residues 210-230 (PILEILPLLFIVWFIIEAIHY). The Cytoplasmic segment spans residues 231 to 237 (SKEKNYK). A helical transmembrane segment spans residues 238 to 260 (SLIYGLLATLMLALYPFMWSAWW). Residues 261–263 (YGY) are Extracellular-facing. A helical membrane pass occupies residues 264–286 (YIVIAFLVIYAIYKGISYNSIAK). Topologically, residues 287 to 308 (YTKSKNNNHKDKIESEKLEMLN) are cytoplasmic. The helical transmembrane segment at 309 to 329 (ILKISGLFIIGGAVLITALYG) threads the bilayer. Topologically, residues 330–372 (VSTTMNALQAPLNYLGLDEVSSQTGWPNVLTTVSELDTASLDE) are extracellular. The TIXE motif signature appears at 361–364 (TVSE). Glu364 contacts Mn(2+). A helical transmembrane segment spans residues 373 to 393 (IISSSLGSIHLFAIGLIGIFL). Over 394–413 (SLFRKVLTPVKQISNGLAEK) the chain is Cytoplasmic. A helical transmembrane segment spans residues 414-434 (LDIKYALLLIIWFAVTFLAAS). Over 435–438 (KGVR) the chain is Extracellular. A glycophospholipid is bound at residue Arg438. A helical transmembrane segment spans residues 439-459 (FVALMVPPLSIGVGIFVGFIE). At 460–469 (QFIKNNLDKK) the chain is on the cytoplasmic side. A helical membrane pass occupies residues 470-490 (YEYVAYPTIAIIVLYALFTIY). Residues 491–506 (RADSADLVRMLLPSNY) lie on the Extracellular side of the membrane. The helical transmembrane segment at 507-527 (VPIAEGIMLASLAVLIIYKVA) threads the bilayer. At 528–541 (ELIAESNKKLVMNK) the chain is on the cytoplasmic side. The helical transmembrane segment at 542 to 562 (IFMILLAIGLITPTIATIVPF) threads the bilayer. Over 563–917 (YSVPTYNDGW…FSVDYGNYSK (355 aa)) the chain is Extracellular. Residues 592-594 (WWD) form an interacts with target acceptor peptide in protein substrate region. A WWDYG motif motif is present at residues 592–596 (WWDNG). The MI motif signature appears at 719 to 726 (MTSIASVW).

Belongs to the STT3 family. Requires Mn(2+) as cofactor. The cofactor is Mg(2+).

It is found in the cell membrane. It catalyses the reaction an archaeal dolichyl phosphooligosaccharide + [protein]-L-asparagine = an archaeal dolichyl phosphate + a glycoprotein with the oligosaccharide chain attached by N-beta-D-glycosyl linkage to a protein L-asparagine.. It participates in cell surface structure biogenesis; S-layer biogenesis. Its pathway is protein modification; protein glycosylation. In terms of biological role, oligosaccharyl transferase (OST) that catalyzes the initial transfer of a defined glycan (ManNAcGlc-2,3-diNAcAGlcNAc in M.voltae) from the lipid carrier dolichol-monophosphate to an asparagine residue within an Asn-X-Ser/Thr consensus motif in nascent polypeptide chains, the first step in protein N-glycosylation. Involved in the assembly of an N-linked disaccharide that decorates the S-layer glycoprotein and flagellins. The protein is Dolichyl-phosphooligosaccharide-protein glycotransferase of Methanococcus voltae.